The chain runs to 95 residues: MVYISNGQVLDGQSRSPWRLSFLTDMFWGITDFVVMFFQSIIHPNVTRRGCQNSSSSTRYDDGRGPPGHPRRMGRINHGSGPSAPPMAGGGGUGR.

Residues 20–42 traverse the membrane as a helical segment; sequence LSFLTDMFWGITDFVVMFFQSII. Residues 47–95 form a disordered region; that stretch reads TRRGCQNSSSSTRYDDGRGPPGHPRRMGRINHGSGPSAPPMAGGGGUGR. A non-standard amino acid (selenocysteine) is located at residue Sec93.

It belongs to the selenoprotein K family.

The protein localises to the endoplasmic reticulum membrane. Its subcellular location is the cell membrane. In terms of biological role, required for Ca(2+) flux in immune cells and plays a role in T-cell proliferation and in T-cell and neutrophil migration. Involved in endoplasmic reticulum-associated degradation (ERAD) of soluble glycosylated proteins. Required for cell surface expression of CD36 and involved in macrophage uptake of low-density lipoprotein and in foam cell formation. Required for palmitoylation. The chain is Selenoprotein K (selenok) from Xenopus laevis (African clawed frog).